Here is a 736-residue protein sequence, read N- to C-terminus: Phosphoribosylformylglycinamidine synthase subunit PurL (736 aa).

The active site involves histidine 48. Residues tyrosine 51 and lysine 90 each coordinate ATP. Glutamate 92 contributes to the Mg(2+) binding site. Residues 93–96 (SHNH) and arginine 115 each bind substrate. Histidine 94 functions as the Proton acceptor in the catalytic mechanism. Aspartate 116 lines the Mg(2+) pocket. Position 239 (glutamine 239) interacts with substrate. Aspartate 267 is a Mg(2+) binding site. Residue 311–313 (ESQ) coordinates substrate. Residues aspartate 492 and glycine 529 each coordinate ATP. Asparagine 530 provides a ligand contact to Mg(2+). A substrate-binding site is contributed by serine 532.

Belongs to the FGAMS family. Monomer. Part of the FGAM synthase complex composed of 1 PurL, 1 PurQ and 2 PurS subunits.

It is found in the cytoplasm. It catalyses the reaction N(2)-formyl-N(1)-(5-phospho-beta-D-ribosyl)glycinamide + L-glutamine + ATP + H2O = 2-formamido-N(1)-(5-O-phospho-beta-D-ribosyl)acetamidine + L-glutamate + ADP + phosphate + H(+). The protein operates within purine metabolism; IMP biosynthesis via de novo pathway; 5-amino-1-(5-phospho-D-ribosyl)imidazole from N(2)-formyl-N(1)-(5-phospho-D-ribosyl)glycinamide: step 1/2. Its function is as follows. Part of the phosphoribosylformylglycinamidine synthase complex involved in the purines biosynthetic pathway. Catalyzes the ATP-dependent conversion of formylglycinamide ribonucleotide (FGAR) and glutamine to yield formylglycinamidine ribonucleotide (FGAM) and glutamate. The FGAM synthase complex is composed of three subunits. PurQ produces an ammonia molecule by converting glutamine to glutamate. PurL transfers the ammonia molecule to FGAR to form FGAM in an ATP-dependent manner. PurS interacts with PurQ and PurL and is thought to assist in the transfer of the ammonia molecule from PurQ to PurL. In Bradyrhizobium diazoefficiens (strain JCM 10833 / BCRC 13528 / IAM 13628 / NBRC 14792 / USDA 110), this protein is Phosphoribosylformylglycinamidine synthase subunit PurL.